The following is an 868-amino-acid chain: Muscle, skeletal receptor tyrosine protein kinase (868 aa).

An N-terminal signal peptide occupies residues 1-21 (MRELVNIPLLQMLTLVAFSGT). Residues 22–494 (EKLPKAPVIT…FAVSPAYSMT (473 aa)) are Extracellular-facing. Ig-like domains are found at residues 28–116 (PVIT…GALQ), 121–205 (PKIT…KLVK), and 212–302 (ARIL…ATVS). 3 cysteine pairs are disulfide-bonded: Cys-49-Cys-99, Cys-98-Cys-112, and Cys-142-Cys-190. Residue Asn-222 is glycosylated (N-linked (GlcNAc...) asparagine). 6 cysteine pairs are disulfide-bonded: Cys-233–Cys-282, Cys-317–Cys-382, Cys-325–Cys-375, Cys-366–Cys-406, Cys-394–Cys-447, and Cys-398–Cys-434. Residues 312–450 (ESKGYCAQYR…HQDPTACTRL (139 aa)) form the FZ domain. A glycan (N-linked (GlcNAc...) asparagine) is linked at Asn-338. N-linked (GlcNAc...) asparagine glycosylation is present at Asn-459. A helical membrane pass occupies residues 495 to 515 (VIISIMSCFAVFALLTITTLY). Residues 516–868 (CCRRRREWKN…CERAEGTVGV (353 aa)) lie on the Cytoplasmic side of the membrane. Tyr-553 carries the phosphotyrosine; by autocatalysis modification. In terms of domain architecture, Protein kinase spans 574–855 (IEYVRDIGEG…PSFCSIHRIL (282 aa)). ATP-binding positions include 580-588 (IGEGAFGRV) and Lys-608. Residues Ser-680 and Ser-697 each carry the phosphoserine; by CK2 modification. Asp-724 acts as the Proton acceptor in catalysis. Position 754 is a phosphotyrosine; by autocatalysis (Tyr-754).

It belongs to the protein kinase superfamily. Tyr protein kinase family. Monomer. Homodimer. Interacts with LRP4; the heterodimer forms an AGRIN receptor complex that binds AGRIN resulting in activation of MUSK. Forms a heterotetramer composed of 2 DOK7 and 2 MUSK molecules which facilitates MUSK trans-autophosphorylation on tyrosine residue and activation. Interacts (via cytoplasmic part) with DOK7 (via IRS-type PTB domain); requires MUSK phosphorylation. Interacts with DVL1 (via DEP domain); the interaction is direct and mediates the formation of a DVL1, MUSK and PAK1 ternary complex involved in AChR clustering. Interacts with PDZRN3; this interaction is enhanced by agrin. Interacts with FNTA; the interaction is direct and mediates AGRIN-induced phosphorylation and activation of FNTA. Interacts with CSNK2B; mediates regulation by CK2. Interacts (via the cytoplasmic domain) with DNAJA3. Interacts with NSF; may regulate MUSK endocytosis and activity. Interacts with CAV3; may regulate MUSK signaling. Interacts with RNF31. Interacts with DOK7. Mg(2+) is required as a cofactor. In terms of processing, ubiquitinated by PDZRN3. Ubiquitination promotes endocytosis and lysosomal degradation. Phosphorylated. Phosphorylation is induced by AGRIN in a LRP4-dependent manner. Autophosphorylated. Autophosphorylation at Tyr-553 is required for interaction with DOK7 which in turn stimulates the phosphorylation and the activation of MUSK. Post-translationally, neddylated. In terms of tissue distribution, muscle specific.

It localises to the postsynaptic cell membrane. The enzyme catalyses L-tyrosyl-[protein] + ATP = O-phospho-L-tyrosyl-[protein] + ADP + H(+). Its activity is regulated as follows. Positively regulated by CK2. Its function is as follows. Receptor tyrosine kinase which plays a central role in the formation and the maintenance of the neuromuscular junction (NMJ), the synapse between the motor neuron and the skeletal muscle. Recruitment of AGRIN by LRP4 to the MUSK signaling complex induces phosphorylation and activation of MUSK, the kinase of the complex. The activation of MUSK in myotubes regulates the formation of NMJs through the regulation of different processes including the specific expression of genes in subsynaptic nuclei, the reorganization of the actin cytoskeleton and the clustering of the acetylcholine receptors (AChR) in the postsynaptic membrane. May regulate AChR phosphorylation and clustering through activation of ABL1 and Src family kinases which in turn regulate MUSK. DVL1 and PAK1 that form a ternary complex with MUSK are also important for MUSK-dependent regulation of AChR clustering. May positively regulate Rho family GTPases through FNTA. Mediates the phosphorylation of FNTA which promotes prenylation, recruitment to membranes and activation of RAC1 a regulator of the actin cytoskeleton and of gene expression. Other effectors of the MUSK signaling include DNAJA3 which functions downstream of MUSK. May also play a role within the central nervous system by mediating cholinergic responses, synaptic plasticity and memory formation. This Rattus norvegicus (Rat) protein is Muscle, skeletal receptor tyrosine protein kinase (Musk).